The primary structure comprises 111 residues: Putative single-stranded DNA-binding protein ycf41 (111 aa).

Residues 1-98 enclose the SSB domain; the sequence is MNKCNLLVQI…FSTSRIFKYK (98 aa).

It is found in the plastid. It localises to the chloroplast. The chain is Putative single-stranded DNA-binding protein ycf41 (ycf41) from Porphyra purpurea (Red seaweed).